Here is a 237-residue protein sequence, read N- to C-terminus: Phosphoribosylaminoimidazole-succinocarboxamide synthase (237 aa).

Belongs to the SAICAR synthetase family.

The catalysed reaction is 5-amino-1-(5-phospho-D-ribosyl)imidazole-4-carboxylate + L-aspartate + ATP = (2S)-2-[5-amino-1-(5-phospho-beta-D-ribosyl)imidazole-4-carboxamido]succinate + ADP + phosphate + 2 H(+). It participates in purine metabolism; IMP biosynthesis via de novo pathway; 5-amino-1-(5-phospho-D-ribosyl)imidazole-4-carboxamide from 5-amino-1-(5-phospho-D-ribosyl)imidazole-4-carboxylate: step 1/2. The chain is Phosphoribosylaminoimidazole-succinocarboxamide synthase from Listeria welshimeri serovar 6b (strain ATCC 35897 / DSM 20650 / CCUG 15529 / CIP 8149 / NCTC 11857 / SLCC 5334 / V8).